A 69-amino-acid polypeptide reads, in one-letter code: Light-harvesting protein B-1015 beta chain (69 aa).

At 2 to 21 (ADLKPSLTGLTEEEAKEFHG) the chain is on the cytoplasmic side. Residues histidine 20 and histidine 38 each coordinate a bacteriochlorophyll. The chain crosses the membrane as a helical span at residues 22-44 (IFVTSTVLYLATAVIVHYLVWTA). At 45–56 (RPWIAPIPKGWV) the chain is on the periplasmic side. The propeptide occupies 57-69 (NLEGVQSALSYLV).

Belongs to the antenna complex beta subunit family. The core complex is formed by different alpha and beta chains, binding bacteriochlorophyll molecules, and arranged most probably in tetrameric structures disposed around the reaction center. The non-pigmented gamma chains may constitute additional components.

It localises to the cell inner membrane. Antenna complexes are light-harvesting systems, which transfer the excitation energy to the reaction centers. The chain is Light-harvesting protein B-1015 beta chain (pufB) from Blastochloris viridis (Rhodopseudomonas viridis).